Here is a 349-residue protein sequence, read N- to C-terminus: Terpene synthase 2 (349 aa).

The DDxx(x)D/E motif signature appears at 84-89; that stretch reads DDLFDG. The NDxxSxxxD/E motif motif lies at 229–237; that stretch reads NDCVSYEKE.

It belongs to the terpene synthase family.

The catalysed reaction is (2E,6E)-farnesyl diphosphate = (3S)-(+)-asterisca-2(9),6-diene + diphosphate. The enzyme catalyses (2E)-geranyl diphosphate = (Z)-beta-ocimene + diphosphate. It catalyses the reaction (2E)-geranyl diphosphate + H2O = linalool + diphosphate. Terpene synthase that converts its substrate farnesyl diphosphate (FPP) into the sesquiterpene (3S)-(+)-asterisca-2(9),6-diene. Is also able to convert geranyl diphosphate (GPP) into a mixture of monoterpenes including (Z)-beta-ocimene, allo-ocimene and linalool. The sequence is that of Terpene synthase 2 from Dictyostelium discoideum (Social amoeba).